A 193-amino-acid chain; its full sequence is GTP cyclohydrolase-2 (193 aa).

Residue 45–49 (RIHSE) coordinates GTP. Positions 50, 61, and 63 each coordinate Zn(2+). Residues Gln66, 87–89 (EGR), and Thr109 contribute to the GTP site. The active-site Proton acceptor is the Asp121. Arg123 serves as the catalytic Nucleophile. 2 residues coordinate GTP: Thr144 and Lys149.

The protein belongs to the GTP cyclohydrolase II family. Zn(2+) serves as cofactor.

It catalyses the reaction GTP + 4 H2O = 2,5-diamino-6-hydroxy-4-(5-phosphoribosylamino)-pyrimidine + formate + 2 phosphate + 3 H(+). Its pathway is cofactor biosynthesis; riboflavin biosynthesis; 5-amino-6-(D-ribitylamino)uracil from GTP: step 1/4. Functionally, catalyzes the conversion of GTP to 2,5-diamino-6-ribosylamino-4(3H)-pyrimidinone 5'-phosphate (DARP), formate and pyrophosphate. The polypeptide is GTP cyclohydrolase-2 (Campylobacter hominis (strain ATCC BAA-381 / DSM 21671 / CCUG 45161 / LMG 19568 / NCTC 13146 / CH001A)).